A 511-amino-acid polypeptide reads, in one-letter code: N-acetylgalactosamine-6-O-sulfatase (511 aa).

Position 83 is a 3-oxoalanine (Ser) (Ser-83).

It belongs to the sulfatase family. The conversion to 3-oxoalanine (also known as C-formylglycine, FGly), of a serine or cysteine residue in prokaryotes and of a cysteine residue in eukaryotes, is critical for catalytic activity.

In terms of biological role, exosulfatase involved in the degradation of the glycosaminoglycans (GAGs) chondroitin sulfate (CS) and dermatan sulfate (DS). Catalyzes the hydrolysis of the 6-sulfate groups of the N-acetyl-D-galactosamine 6-sulfate units. GAG-specific sulfatases play a key role in the persistence of the major human gut symbiont B.thetaiotaomicron in the host gastrointestinal tract. The chain is N-acetylgalactosamine-6-O-sulfatase from Bacteroides thetaiotaomicron (strain ATCC 29148 / DSM 2079 / JCM 5827 / CCUG 10774 / NCTC 10582 / VPI-5482 / E50).